A 122-amino-acid polypeptide reads, in one-letter code: Large ribosomal subunit protein bL12 (122 aa).

The protein belongs to the bacterial ribosomal protein bL12 family. In terms of assembly, homodimer. Part of the ribosomal stalk of the 50S ribosomal subunit. Forms a multimeric L10(L12)X complex, where L10 forms an elongated spine to which 2 to 4 L12 dimers bind in a sequential fashion. Binds GTP-bound translation factors.

In terms of biological role, forms part of the ribosomal stalk which helps the ribosome interact with GTP-bound translation factors. Is thus essential for accurate translation. The sequence is that of Large ribosomal subunit protein bL12 from Streptococcus pneumoniae serotype 19F (strain G54).